A 534-amino-acid chain; its full sequence is NAD(P)H-quinone oxidoreductase chain 4 1 (534 aa).

14 consecutive transmembrane segments (helical) span residues 6-26 (IPWL…IPLI), 34-54 (IRWY…TAFW), 87-107 (LSMP…LAAW), 113-133 (PKLF…VFAV), 136-156 (LLLF…LISI), 169-189 (FILY…ALAF), 209-229 (ALEL…LPIF), 243-263 (SAPV…YGLI), 277-297 (FAPL…LTAF), 311-331 (ISHM…GMNG), 332-352 (AVLQ…LSGV), 376-396 (FAMF…SGFV), 418-438 (IAIF…LSML), and 464-484 (IFVA…PKLA).

This sequence belongs to the complex I subunit 4 family.

The protein localises to the cellular thylakoid membrane. It carries out the reaction a plastoquinone + NADH + (n+1) H(+)(in) = a plastoquinol + NAD(+) + n H(+)(out). The catalysed reaction is a plastoquinone + NADPH + (n+1) H(+)(in) = a plastoquinol + NADP(+) + n H(+)(out). Functionally, NDH-1 shuttles electrons from NAD(P)H, via FMN and iron-sulfur (Fe-S) centers, to quinones in the respiratory chain. The immediate electron acceptor for the enzyme in this species is believed to be plastoquinone. Couples the redox reaction to proton translocation (for every two electrons transferred, four hydrogen ions are translocated across the cytoplasmic membrane), and thus conserves the redox energy in a proton gradient. This chain is NAD(P)H-quinone oxidoreductase chain 4 1, found in Picosynechococcus sp. (strain ATCC 27264 / PCC 7002 / PR-6) (Agmenellum quadruplicatum).